The sequence spans 155 residues: Myosin light chain alkali (155 aa).

EF-hand domains lie at 7–41 (REVE…LNLN) and 80–115 (GCYE…LGES).

As to quaternary structure, myosin is a hexamer of 2 heavy chains and 4 light chains.

This is Myosin light chain alkali (Mlc1) from Drosophila simulans (Fruit fly).